The sequence spans 140 residues: Ribosome maturation factor RimP (140 aa).

It belongs to the RimP family.

The protein localises to the cytoplasm. In terms of biological role, required for maturation of 30S ribosomal subunits. This chain is Ribosome maturation factor RimP, found in Campylobacter jejuni subsp. jejuni serotype O:23/36 (strain 81-176).